Consider the following 184-residue polypeptide: GTP cyclohydrolase 1 (184 aa).

3 residues coordinate Zn(2+): Cys75, His78, and Cys146.

It belongs to the GTP cyclohydrolase I family. In terms of assembly, homomer.

The catalysed reaction is GTP + H2O = 7,8-dihydroneopterin 3'-triphosphate + formate + H(+). It functions in the pathway cofactor biosynthesis; 7,8-dihydroneopterin triphosphate biosynthesis; 7,8-dihydroneopterin triphosphate from GTP: step 1/1. This is GTP cyclohydrolase 1 from Streptococcus pneumoniae (strain Hungary19A-6).